The chain runs to 158 residues: MATIEGTFVNSSSLRVAIVIARFNDLITNKLLSGCMDCLSRHGIDVSESSNQLDIAWVPGSFELPIISQKLARNGNYDVVITLGAVIRGDTPHFDVVVSEASKGIATVSRETGVPIIFGVLTTDTMQQALERAGIKNNLGWSYALQALEMGSLMKAVN.

5-amino-6-(D-ribitylamino)uracil is bound by residues phenylalanine 23, 61–63 (SFE), and 85–87 (AVI). Position 90 to 91 (90 to 91 (DT)) interacts with (2S)-2-hydroxy-3-oxobutyl phosphate. The Proton donor role is filled by histidine 93. Phenylalanine 118 is a 5-amino-6-(D-ribitylamino)uracil binding site. Arginine 132 provides a ligand contact to (2S)-2-hydroxy-3-oxobutyl phosphate.

It belongs to the DMRL synthase family.

The catalysed reaction is (2S)-2-hydroxy-3-oxobutyl phosphate + 5-amino-6-(D-ribitylamino)uracil = 6,7-dimethyl-8-(1-D-ribityl)lumazine + phosphate + 2 H2O + H(+). It functions in the pathway cofactor biosynthesis; riboflavin biosynthesis; riboflavin from 2-hydroxy-3-oxobutyl phosphate and 5-amino-6-(D-ribitylamino)uracil: step 1/2. Catalyzes the formation of 6,7-dimethyl-8-ribityllumazine by condensation of 5-amino-6-(D-ribitylamino)uracil with 3,4-dihydroxy-2-butanone 4-phosphate. This is the penultimate step in the biosynthesis of riboflavin. This is 6,7-dimethyl-8-ribityllumazine synthase from Prochlorococcus marinus (strain NATL2A).